Reading from the N-terminus, the 250-residue chain is Pre-protein VI (250 aa).

A propeptide spanning residues 1 to 33 is cleaved from the precursor; that stretch reads MEDINFASLAPRHGSRPFMGNWQDIGTSNMSGG. The amphipathic alpha-helix essential for membrane lytic activity stretch occupies residues 34-54; the sequence is AFSWGSLWSGIKNFGSTIKNY. The involved in endosomal membrane lysis stretch occupies residues 36 to 53; that stretch reads SWGSLWSGIKNFGSTIKN. The segment at 48 to 74 is interaction with hexon protein; that stretch reads GSTIKNYGSKAWNSSTGQMLRDKLKEQ. The short motif at 67–76 is the Nuclear export signal element; it reads LRDKLKEQNF. A disordered region spans residues 103 to 147; sequence INSKLDPRPPVEEPPPAVETVSPEGRGEKRPRPDREETLVTQIDE. Ser124 is modified (phosphoserine; by host). Basic and acidic residues predominate over residues 127–140; the sequence is GRGEKRPRPDREET. The Nuclear localization signal signature appears at 131–135; sequence KRPRP. Thr143 is subject to Phosphothreonine; by host. The PPXY motif signature appears at 148–151; that stretch reads PPSY. A compositionally biased stretch (low complexity) spans 206 to 220; sequence PSRASLRRAASGPRS. The segment at 206–226 is disordered; sequence PSRASLRRAASGPRSMRPVAS. The short motif at 231–242 is the Nuclear export signal element; sequence STLNSIVGLGVQ. Residues 233–239 are interaction with hexon protein; the sequence is LNSIVGL. A binds to importin alpha/beta, involved in hexon nuclear import region spans residues 240–250; sequence GVQSLKRRRCF. The short motif at 245 to 248 is the Nuclear localization signal element; the sequence is KRRR.

This sequence belongs to the adenoviridae protein VI family. As to quaternary structure, interacts with hexon protein; this interaction allows nuclear import of hexon trimers and possibly pre-capsid assembly. Interacts (via C-terminal NLS) with importin alpha/beta. Interacts (via PPxY motif) with host NEDD4 ubiquitine ligase; this interaction might play a role in virus intracellular transport during entry. Part of a complex composed of the core-capsid bridging protein, the endosome lysis protein VI and the hexon-linking protein VIII; these interactions bridge the virus core to the capsid. Interacts with peripentonal hexons; this interaction stabilizes the capsid by gluing two peripentonal hexons together and joining them with an adjacent group-of-nine hexon. In terms of assembly, heterodimer with the viral protease; disulfide-linked. Interacts with the viral protease. Ubiquitinated by Nedd4 following partial capsid disassembly; which might play a role in intracellular virus movement during entry. In terms of processing, contains the major nuclear import and export signals. Proteolytically removed during virion maturation. The processing of the C-terminus turns the precursor into a mature viral structural protein and abrogates its ability to promote hexon import and act as a potential chaperone protein.

Its subcellular location is the host nucleus. The protein resides in the host cytoplasm. The protein localises to the virion. Functionally, during virus assembly, promotes hexon trimers nuclear import through nuclear pore complexes via an importin alpha/beta-dependent mechanism. By analogy to herpesviruses capsid assembly, might act as a chaperone to promote the formation of the icosahedral capsid. Its function is as follows. Structural component of the virion that provides increased stability to the particle shell through its interaction with the core-capsid bridging protein and the hexon-linking protein VIII. Fibers shedding during virus entry into host cell allows the endosome lysis protein to be exposed as a membrane-lytic peptide. Exhibits pH-independent membrane fragmentation activity and probably mediates viral rapid escape from host endosome via organellar membrane lysis. It is not clear if it then remains partially associated with the capsid and involved in the intracellular microtubule-dependent transport of capsid to the nucleus, or if it is lost during endosomal penetration. Cofactor that activates the viral protease. Binds to viral protease in a 1:1 ratio. This chain is Pre-protein VI, found in Human adenovirus C serotype 2 (HAdV-2).